We begin with the raw amino-acid sequence, 924 residues long: Lon protease homolog 3, mitochondrial (924 aa).

A mitochondrion-targeting transit peptide spans 1 to 63; it reads MMPKRFNTSG…PVQSLLLFRA (63 aa). The 214-residue stretch at 112 to 325 folds into the Lon N-terminal domain; sequence VIALPLPHKP…LTLELVKKQV (214 aa). 447–454 serves as a coordination point for ATP; that stretch reads GPPGVGKT. The Lon proteolytic domain maps to 738–922; it reads QTPVGVVMGL…EKIFDLAFNY (185 aa). Active-site residues include S828 and K871.

Belongs to the peptidase S16 family. As to quaternary structure, homohexamer or homoheptamer. Organized in a ring with a central cavity.

The protein resides in the mitochondrion matrix. The catalysed reaction is Hydrolysis of proteins in presence of ATP.. In terms of biological role, ATP-dependent serine protease that mediates the selective degradation of misfolded, unassembled or oxidatively damaged polypeptides as well as certain short-lived regulatory proteins in the mitochondrial matrix. May also have a chaperone function in the assembly of inner membrane protein complexes. Participates in the regulation of mitochondrial gene expression and in the maintenance of the integrity of the mitochondrial genome. Binds to mitochondrial DNA in a site-specific manner. This Arabidopsis thaliana (Mouse-ear cress) protein is Lon protease homolog 3, mitochondrial (LON3).